The chain runs to 461 residues: Glutamyl-tRNA reductase (461 aa).

Residues 50-53 (TCNR), serine 111, 116-118 (EPQ), and glutamine 122 each bind substrate. The Nucleophile role is filled by cysteine 51. 191-196 (GAGEMA) lines the NADP(+) pocket.

The protein belongs to the glutamyl-tRNA reductase family. As to quaternary structure, homodimer.

The enzyme catalyses (S)-4-amino-5-oxopentanoate + tRNA(Glu) + NADP(+) = L-glutamyl-tRNA(Glu) + NADPH + H(+). It functions in the pathway porphyrin-containing compound metabolism; protoporphyrin-IX biosynthesis; 5-aminolevulinate from L-glutamyl-tRNA(Glu): step 1/2. Functionally, catalyzes the NADPH-dependent reduction of glutamyl-tRNA(Glu) to glutamate 1-semialdehyde (GSA). The protein is Glutamyl-tRNA reductase of Syntrophobacter fumaroxidans (strain DSM 10017 / MPOB).